We begin with the raw amino-acid sequence, 155 residues long: Microsomal glutathione S-transferase 1 (155 aa).

Residues 3–9 are Lumenal-facing; that stretch reads NLSQLME. The chain crosses the membrane as a helical span at residues 10 to 33; it reads NEVFMAFASYTTIVLSKMNFMSTA. The Cytoplasmic segment spans residues 34–62; it reads TAFYRLTKKVFANPEDCAGFGKGENAKKY. Residue Arg38 coordinates glutathione. An N6-acetyllysine mark is found at Lys42, Lys55, and Lys60. A helical transmembrane segment spans residues 63-96; it reads LRTDDRVERVRRAHLNDLENIVPFLGIGLLYSLS. Residues Arg73, Arg74, His76, and Glu81 each coordinate glutathione. The Lumenal portion of the chain corresponds to 97–99; sequence GPD. Residues 100–123 form a helical membrane-spanning segment; sequence LSTAILHFRLFVRARIYHTIAYLT. Tyr121 is a binding site for glutathione. The Cytoplasmic portion of the chain corresponds to 124-128; that stretch reads PLPQP. The helical transmembrane segment at 129–148 threads the bilayer; sequence NRALAFFIGYGVTLSMAYRL. At 149-155 the chain is on the lumenal side; that stretch reads LKSKLYL.

It belongs to the MAPEG family. As to quaternary structure, homotrimer; The trimer binds only one molecule of glutathione.

Its subcellular location is the endoplasmic reticulum membrane. The protein resides in the mitochondrion outer membrane. The enzyme catalyses RX + glutathione = an S-substituted glutathione + a halide anion + H(+). In terms of biological role, conjugation of reduced glutathione to a wide number of exogenous and endogenous hydrophobic electrophiles. The chain is Microsomal glutathione S-transferase 1 (MGST1) from Bos taurus (Bovine).